The chain runs to 259 residues: 4-hydroxy-tetrahydrodipicolinate reductase (259 aa).

Residue 9-14 (GANGRM) participates in NAD(+) binding. NADP(+) is bound at residue R37. Residues 92 to 94 (GTT) and 116 to 119 (ASNM) each bind NAD(+). Residue H149 is the Proton donor/acceptor of the active site. H150 contributes to the (S)-2,3,4,5-tetrahydrodipicolinate binding site. K153 serves as the catalytic Proton donor. 159 to 160 (GT) is a binding site for (S)-2,3,4,5-tetrahydrodipicolinate.

This sequence belongs to the DapB family.

The protein resides in the cytoplasm. The catalysed reaction is (S)-2,3,4,5-tetrahydrodipicolinate + NAD(+) + H2O = (2S,4S)-4-hydroxy-2,3,4,5-tetrahydrodipicolinate + NADH + H(+). The enzyme catalyses (S)-2,3,4,5-tetrahydrodipicolinate + NADP(+) + H2O = (2S,4S)-4-hydroxy-2,3,4,5-tetrahydrodipicolinate + NADPH + H(+). It participates in amino-acid biosynthesis; L-lysine biosynthesis via DAP pathway; (S)-tetrahydrodipicolinate from L-aspartate: step 4/4. Its function is as follows. Catalyzes the conversion of 4-hydroxy-tetrahydrodipicolinate (HTPA) to tetrahydrodipicolinate. This chain is 4-hydroxy-tetrahydrodipicolinate reductase, found in Desulfovibrio desulfuricans (strain ATCC 27774 / DSM 6949 / MB).